The sequence spans 312 residues: MEKNTASEDAFALSEATARDYLVLLKPRVMSLVVFTGLVGLVLAPGHMNPVLAVISILCIAVGAGASGALNMWYDADIDAVMKRTRKRPIPAGIIAPNQVLAFGLTLSAFSVMTLGLMVNWLAAALLAFTIFFYAVIYTMWLKRSTPQNIVIGGAAGAFPPMIGWAAATGEITWDSLVLFMIIFLWTPPHFWALSLFTTNDYEAARIPMMPNVKGELSTRRQALFYAVLMAPVGVLPWVMGFAGMFYGVVSTLLGLAFVYYAWRLWAADSQPQMLAAARKLFRFSLLYLAGIFAVLLFEALTFKLLAAFGVF.

9 helical membrane passes run 29–49, 50–70, 90–110, 117–137, 150–170, 177–197, 223–243, 246–266, and 292–312; these read VMSLVVFTGLVGLVLAPGHMN, PVLAVISILCIAVGAGASGAL, IPAGIIAPNQVLAFGLTLSAF, LMVNWLAAALLAFTIFFYAVI, IVIGGAAGAFPPMIGWAAATG, LVLFMIIFLWTPPHFWALSLF, ALFYAVLMAPVGVLPWVMGFA, FYGVVSTLLGLAFVYYAWRLW, and IFAVLLFEALTFKLLAAFGVF.

The protein belongs to the UbiA prenyltransferase family. Protoheme IX farnesyltransferase subfamily.

Its subcellular location is the cell inner membrane. The enzyme catalyses heme b + (2E,6E)-farnesyl diphosphate + H2O = Fe(II)-heme o + diphosphate. It participates in porphyrin-containing compound metabolism; heme O biosynthesis; heme O from protoheme: step 1/1. Functionally, converts heme B (protoheme IX) to heme O by substitution of the vinyl group on carbon 2 of heme B porphyrin ring with a hydroxyethyl farnesyl side group. The sequence is that of Protoheme IX farnesyltransferase from Brucella melitensis biotype 1 (strain ATCC 23456 / CCUG 17765 / NCTC 10094 / 16M).